Consider the following 129-residue polypeptide: Small ribosomal subunit protein uS8 (129 aa).

It belongs to the universal ribosomal protein uS8 family. Part of the 30S ribosomal subunit.

In terms of biological role, one of the primary rRNA binding proteins, it binds directly to 16S rRNA central domain where it helps coordinate assembly of the platform of the 30S subunit. The polypeptide is Small ribosomal subunit protein uS8 (Picrophilus torridus (strain ATCC 700027 / DSM 9790 / JCM 10055 / NBRC 100828 / KAW 2/3)).